We begin with the raw amino-acid sequence, 92 residues long: Small integral membrane protein 12 (92 aa).

Residues 12–34 (YAPYVTFPVAFVVGAVGYHLEWF) traverse the membrane as a helical segment.

Belongs to the SMIM12 family.

The protein resides in the membrane. The protein is Small integral membrane protein 12 (SMIM12) of Bos taurus (Bovine).